A 277-amino-acid polypeptide reads, in one-letter code: Urease accessory protein UreD (277 aa).

This sequence belongs to the UreD family. UreD, UreF and UreG form a complex that acts as a GTP-hydrolysis-dependent molecular chaperone, activating the urease apoprotein by helping to assemble the nickel containing metallocenter of UreC. The UreE protein probably delivers the nickel.

The protein localises to the cytoplasm. Functionally, required for maturation of urease via the functional incorporation of the urease nickel metallocenter. This chain is Urease accessory protein UreD, found in Rhodopseudomonas palustris (strain BisB18).